Here is a 287-residue protein sequence, read N- to C-terminus: Large ribosomal subunit protein uL2 (287 aa).

The disordered stretch occupies residues 222–266 (RGIRPTVRGSAMNPNDHPHGGGEGRSPVGRDAPRTPWGKRHMGVK).

This sequence belongs to the universal ribosomal protein uL2 family. As to quaternary structure, part of the 50S ribosomal subunit. Forms a bridge to the 30S subunit in the 70S ribosome.

In terms of biological role, one of the primary rRNA binding proteins. Required for association of the 30S and 50S subunits to form the 70S ribosome, for tRNA binding and peptide bond formation. It has been suggested to have peptidyltransferase activity; this is somewhat controversial. Makes several contacts with the 16S rRNA in the 70S ribosome. The sequence is that of Large ribosomal subunit protein uL2 from Mycoplasma pneumoniae (strain ATCC 29342 / M129 / Subtype 1) (Mycoplasmoides pneumoniae).